The following is a 786-amino-acid chain: Pentatricopeptide repeat-containing protein At2g22070 (786 aa).

16 PPR repeats span residues 48-78, 79-109, 110-144, 145-179, 180-214, 215-241, 242-276, 278-312, 313-347, 350-376, 377-411, 412-446, 447-477, 479-513, 514-548, and 550-580; these read SVYL…MPLR, TAFS…LPQR, DSVS…GIEP, TQFT…GLRG, NVSV…DISS, WNAM…MAER, DIVT…SLLS, DRFT…GFDI, SGIV…DLKI, FTAL…LKDR, DVVA…GQRP, NSYT…GEIY, SVSV…IRCE, DTVS…GLRP, DHIT…DKII, and TLSH…MPIE. Residues 585-660 form a type E motif region; sequence TWGSLLSACR…EQGFSWIEVK (76 aa). Residues 661-691 form a type E(+) motif region; that stretch reads HKVHVFGVEDGTHPEKNEIYMTMKKIWDEIK. The type DYW motif stretch occupies residues 692–786; that stretch reads KMGYVPDTAS…DGFCSCRDYW (95 aa).

Belongs to the PPR family. PCMP-H subfamily.

The sequence is that of Pentatricopeptide repeat-containing protein At2g22070 (PCMP-H41) from Arabidopsis thaliana (Mouse-ear cress).